Here is a 193-residue protein sequence, read N- to C-terminus: Fe/S biogenesis protein NfuA (193 aa).

Positions 150 and 153 each coordinate [4Fe-4S] cluster.

The protein belongs to the NfuA family. In terms of assembly, homodimer. [4Fe-4S] cluster is required as a cofactor.

In terms of biological role, involved in iron-sulfur cluster biogenesis. Binds a 4Fe-4S cluster, can transfer this cluster to apoproteins, and thereby intervenes in the maturation of Fe/S proteins. Could also act as a scaffold/chaperone for damaged Fe/S proteins. The chain is Fe/S biogenesis protein NfuA from Histophilus somni (strain 129Pt) (Haemophilus somnus).